A 336-amino-acid polypeptide reads, in one-letter code: Dihydroorotate dehydrogenase (quinone) (336 aa).

Residues 62 to 66 (AGLDK) and Thr86 contribute to the FMN site. A substrate-binding site is contributed by Lys66. Position 111–115 (111–115 (NRMGF)) interacts with substrate. Asn139 and Asn172 together coordinate FMN. Residue Asn172 participates in substrate binding. Ser175 (nucleophile) is an active-site residue. Asn177 is a binding site for substrate. Positions 217 and 245 each coordinate FMN. 246–247 (NT) contributes to the substrate binding site. FMN is bound by residues Gly268, Gly297, and 318–319 (YS).

Belongs to the dihydroorotate dehydrogenase family. Type 2 subfamily. In terms of assembly, monomer. Requires FMN as cofactor.

It localises to the cell membrane. It carries out the reaction (S)-dihydroorotate + a quinone = orotate + a quinol. Its pathway is pyrimidine metabolism; UMP biosynthesis via de novo pathway; orotate from (S)-dihydroorotate (quinone route): step 1/1. Functionally, catalyzes the conversion of dihydroorotate to orotate with quinone as electron acceptor. This is Dihydroorotate dehydrogenase (quinone) from Hamiltonella defensa subsp. Acyrthosiphon pisum (strain 5AT).